Consider the following 606-residue polypeptide: Melanoma-associated antigen D2 (606 aa).

The disordered stretch occupies residues 1–204 (MSDTSESGAG…QASGTTGGRR (204 aa)). Residue S2 is modified to N-acetylserine. S5 is modified (phosphoserine). Polar residues predominate over residues 24-37 (SSMMQTLLTVTQNV). T72 is modified (phosphothreonine). Residues 81–93 (TQASSTTQLTDTQ) show a composition bias toward polar residues. Positions 122 to 131 (ETKKVSHVAD) are enriched in basic and acidic residues. Low complexity predominate over residues 142 to 164 (EAAPSQAPADEPEPESAAAQSQE). The residue at position 157 (S157) is a Phosphoserine. Residues 171-181 (KVKAKKARKVK) are compositionally biased toward basic residues. A phosphoserine mark is found at S190, S191, S194, S197, S244, and S247. Residues 248–260 (PKARRGKARRRAA) are compositionally biased toward basic residues. Residues 248-275 (PKARRGKARRRAAKLQSSQEPEAPPPRD) form a disordered region. S264 and S265 each carry phosphoserine. Positions 279-478 (LQGRANDLVK…KEWAAQYREA (200 aa)) constitute an MAGE domain. The interval 534 to 563 (GAEAKAKAQESGSASTGASTSTNNSASASA) is disordered.

In terms of assembly, interacts with GNAS. May interact with DNAJB1. Widely expressed. In the developing and adult kidney, expressed in the thick ascending limb of the loop of Henle and the distal convoluted tubules outside the loop.

Functionally, regulates the expression, localization to the plasma membrane and function of the sodium chloride cotransporters SLC12A1 and SLC12A3, two key components of salt reabsorption in the distal renal tubule. The chain is Melanoma-associated antigen D2 (MAGED2) from Homo sapiens (Human).